A 374-amino-acid chain; its full sequence is Cobalt-precorrin-5B C(1)-methyltransferase (374 aa).

Belongs to the CbiD family.

The enzyme catalyses Co-precorrin-5B + S-adenosyl-L-methionine = Co-precorrin-6A + S-adenosyl-L-homocysteine. The protein operates within cofactor biosynthesis; adenosylcobalamin biosynthesis; cob(II)yrinate a,c-diamide from sirohydrochlorin (anaerobic route): step 6/10. Functionally, catalyzes the methylation of C-1 in cobalt-precorrin-5B to form cobalt-precorrin-6A. The protein is Cobalt-precorrin-5B C(1)-methyltransferase of Synechococcus elongatus (strain ATCC 33912 / PCC 7942 / FACHB-805) (Anacystis nidulans R2).